Here is a 405-residue protein sequence, read N- to C-terminus: Glutathione S-transferase LANCL1 (405 aa).

Residue Cys282 participates in Zn(2+) binding. Glutathione is bound at residue Lys323. Positions 328 and 329 each coordinate Zn(2+). Residue 370–373 (RTPD) coordinates glutathione.

The protein belongs to the LanC-like protein family.

The protein resides in the cytoplasm. The protein localises to the cell membrane. The catalysed reaction is RX + glutathione = an S-substituted glutathione + a halide anion + H(+). The enzyme catalyses 1-chloro-2,4-dinitrobenzene + glutathione = 2,4-dinitrophenyl-S-glutathione + chloride + H(+). In terms of biological role, functions as a glutathione transferase. Catalyzes conjugation of the glutathione (GSH) to artificial substrates 1-chloro-2,4-dinitrobenzene (CDNB) and p-nitrophenyl acetate. Binds glutathione. This chain is Glutathione S-transferase LANCL1, found in Danio rerio (Zebrafish).